The following is a 311-amino-acid chain: Retron Ec78 reverse transcriptase (311 aa).

Positions 15–241 (DSGISAFLVT…HNRHVTGVTI (227 aa)) constitute a Reverse transcriptase domain. The Mg(2+) site is built by Asp96, Asp187, and Asp188.

The protein belongs to the bacterial reverse transcriptase family.

It carries out the reaction DNA(n) + a 2'-deoxyribonucleoside 5'-triphosphate = DNA(n+1) + diphosphate. Functionally, reverse transcriptase (RT) component of antiviral defense system retron Ec78, composed of a non-coding RNA (ncRNA), this reverse transcriptase (RT), a probable ATPase and a putative HNH endonuclease. Expression of retron Ec78 confers protection against bacteriophage T5. At multiplicity of infection (MOI) of 0.02 cultures slow growth when infected with T5 but do not collapse, at MOI 2 cultures enter growth stasis. Responsible for synthesis of msDNA-Ec78 (a linear ssDNA with a 5'-terminal phosphate residue). Unlike most known msDNAs the mature product does not have an RNA component. The retron transcript serves as primer and template for the reaction, and codes for the RT. Not mutagenic when cloned in E.coli. It is thought to be synthesized as a branched RNA with a 2',5'-phosphodiester linkage to ssDNA; the linkage is cleaved endonucleolytically by ExoVII (xseA-xseB) leaving the observed mature 5'-ssDNA terminus. Overexpression of the ncRNA and RT, which leads to increased levels of msDNA, is not mutagenic in vivo. As the stem in the msDNA does not have a mismatch it probably does not bind or sequester MutS and/or MutL. The protein is Retron Ec78 reverse transcriptase of Escherichia coli.